Here is a 674-residue protein sequence, read N- to C-terminus: PTS system glucose-specific EIIBCA component (674 aa).

A PTS EIIB type-1 domain is found at 1–89; the sequence is MASKLTTTSQ…LKLDGMKHFA (89 aa). Cysteine 28 (phosphocysteine intermediate; for EIIB activity) is an active-site residue. One can recognise a PTS EIIC type-1 domain in the interval 117–476; that stretch reads EFLSDTFRPI…DAERDEAKAQ (360 aa). 10 helical membrane-spanning segments follow: residues 126–146, 162–182, 193–213, 225–245, 260–280, 303–323, 344–364, 376–396, 409–429, and 442–462; these read ILWA…ADTF, YVFL…MVGA, WIGA…LGSA, VLND…GLYW, MVFV…FLLG, FILS…GLHW, PMGA…LIAL, LGGM…YGVL, GCLV…AFVF, and LGYT…VLFF. Positions 542-646 constitute a PTS EIIA type-1 domain; sequence DPIFAAGKLG…PLITPVVVSN (105 aa). Catalysis depends on histidine 594, which acts as the Tele-phosphohistidine intermediate; for EIIA activity.

The protein localises to the cell membrane. It catalyses the reaction N(pros)-phospho-L-histidyl-[protein] + D-glucose(out) = D-glucose 6-phosphate(in) + L-histidyl-[protein]. In terms of biological role, the phosphoenolpyruvate-dependent sugar phosphotransferase system (sugar PTS), a major carbohydrate active transport system, catalyzes the phosphorylation of incoming sugar substrates concomitantly with their translocation across the cell membrane. This system is involved in glucose transport. The protein is PTS system glucose-specific EIIBCA component (ptsG) of Corynebacterium glutamicum (Brevibacterium saccharolyticum).